Reading from the N-terminus, the 67-residue chain is DNA-directed RNA polymerases I, II, and III subunit RPABC5 (67 aa).

4 residues coordinate Zn(2+): Cys7, Cys10, Cys44, and Cys45.

The protein belongs to the archaeal Rpo10/eukaryotic RPB10 RNA polymerase subunit family. Component of the RNA polymerase I (Pol I), RNA polymerase II (Pol II) and RNA polymerase III (Pol III) complexes consisting of at least 13, 12 and 17 subunits, respectively.

It is found in the nucleus. Its function is as follows. DNA-dependent RNA polymerase catalyzes the transcription of DNA into RNA using the four ribonucleoside triphosphates as substrates. Common component of RNA polymerases I, II and III which synthesize ribosomal RNA precursors, mRNA precursors and many functional non-coding RNAs, and a small RNAs, such as 5S rRNA and tRNAs, respectively. Pol II is the central component of the basal RNA polymerase II transcription machinery. Pols are composed of mobile elements that move relative to each other. In Pol II, RBP10 is part of the core element with the central large cleft. In Caenorhabditis briggsae, this protein is DNA-directed RNA polymerases I, II, and III subunit RPABC5.